A 490-amino-acid chain; its full sequence is Betaine aldehyde dehydrogenase (490 aa).

K(+) is bound by residues serine 26, isoleucine 27, and aspartate 93. NAD(+) is bound at residue 150 to 152; it reads GAW. Lysine 162 acts as the Charge relay system in catalysis. NAD(+) is bound by residues 176-179 and 230-233; these read KPSE and GVET. Leucine 246 contacts K(+). Glutamate 252 serves as the catalytic Proton acceptor. NAD(+)-binding residues include glycine 254, cysteine 286, and glutamate 387. Residue cysteine 286 is the Nucleophile of the active site. Residue cysteine 286 is modified to Cysteine sulfenic acid (-SOH). Positions 457 and 460 each coordinate K(+). Residue glutamate 464 is the Charge relay system of the active site.

This sequence belongs to the aldehyde dehydrogenase family. In terms of assembly, dimer of dimers. It depends on K(+) as a cofactor.

The enzyme catalyses betaine aldehyde + NAD(+) + H2O = glycine betaine + NADH + 2 H(+). Its pathway is amine and polyamine biosynthesis; betaine biosynthesis via choline pathway; betaine from betaine aldehyde: step 1/1. In terms of biological role, involved in the biosynthesis of the osmoprotectant glycine betaine. Catalyzes the irreversible oxidation of betaine aldehyde to the corresponding acid. The chain is Betaine aldehyde dehydrogenase from Acinetobacter baumannii (strain AB307-0294).